A 1026-amino-acid chain; its full sequence is Multidrug resistance protein MdtC (1026 aa).

11 consecutive transmembrane segments (helical) span residues 16–36 (LLAL…PVAP), 333–353 (EVEQ…FLFL), 360–380 (LIPA…IYLC), 387–407 (LSLM…IVVL), 435–455 (VFSI…MGGI), 459–479 (LFHE…LIAL), 528–548 (WVLL…ISIP), 853–873 (LLLI…LYES), 897–917 (LFNA…IGLV), 953–973 (PILM…FSYG), and 984–1004 (ITIV…TPVV).

Belongs to the resistance-nodulation-cell division (RND) (TC 2.A.6) family. MdtC subfamily. As to quaternary structure, part of a tripartite efflux system composed of MdtA, MdtB and MdtC. MdtC forms a heteromultimer with MdtB.

The protein resides in the cell inner membrane. This is Multidrug resistance protein MdtC from Edwardsiella ictaluri (strain 93-146).